Reading from the N-terminus, the 206-residue chain is Thymidylate kinase (206 aa).

10–17 (GIDGAGKS) is a binding site for ATP.

Belongs to the thymidylate kinase family.

The catalysed reaction is dTMP + ATP = dTDP + ADP. Functionally, phosphorylation of dTMP to form dTDP in both de novo and salvage pathways of dTTP synthesis. The chain is Thymidylate kinase from Neisseria meningitidis serogroup C / serotype 2a (strain ATCC 700532 / DSM 15464 / FAM18).